Reading from the N-terminus, the 305-residue chain is MIFQQTLGNKATFSGIGLHTGKTITLTLRPAEAGTGIVFHRVDLSPAVSIEAHASNVVNTRLSTTIGRGDASVSTIEHLMAALYGCGIDNAHVDIDGPEVPIMDGSAAPFVAAIAKAGVKMSGKARKYLVVKKPVTVVDGDKKATIIPSRHYKISFDMQFAHPAVKSQFRSLEFSQESFIGDFAAARTFGFLAEVEMMKSHGLALGGSLENAVVIGDNGVINPEGLRFQDEFVRHKILDSVGDLSLAGHRLIGHVKATKSGHDLNHKLVTELLKRPDCYTLIEFTPQAFNAPFNIGIPELSWLEA.

Zn(2+)-binding residues include His-78, His-235, and Asp-239. Residue His-262 is the Proton donor of the active site.

It belongs to the LpxC family. Zn(2+) serves as cofactor.

It carries out the reaction a UDP-3-O-[(3R)-3-hydroxyacyl]-N-acetyl-alpha-D-glucosamine + H2O = a UDP-3-O-[(3R)-3-hydroxyacyl]-alpha-D-glucosamine + acetate. Its pathway is glycolipid biosynthesis; lipid IV(A) biosynthesis; lipid IV(A) from (3R)-3-hydroxytetradecanoyl-[acyl-carrier-protein] and UDP-N-acetyl-alpha-D-glucosamine: step 2/6. Its function is as follows. Catalyzes the hydrolysis of UDP-3-O-myristoyl-N-acetylglucosamine to form UDP-3-O-myristoylglucosamine and acetate, the committed step in lipid A biosynthesis. The protein is UDP-3-O-acyl-N-acetylglucosamine deacetylase of Geobacter sp. (strain M21).